We begin with the raw amino-acid sequence, 248 residues long: Probable phosphatase VPA0505 (248 aa).

Residues H8, H10, H16, H41, E74, H102, H132, D194, and H196 each coordinate Zn(2+).

This sequence belongs to the PHP family. Zn(2+) is required as a cofactor.

In Vibrio parahaemolyticus serotype O3:K6 (strain RIMD 2210633), this protein is Probable phosphatase VPA0505.